The following is a 285-amino-acid chain: Bifunctional protein FolD (285 aa).

NADP(+)-binding positions include 165 to 167 (GRS), Ser-190, and Ile-231.

Belongs to the tetrahydrofolate dehydrogenase/cyclohydrolase family. As to quaternary structure, homodimer.

The catalysed reaction is (6R)-5,10-methylene-5,6,7,8-tetrahydrofolate + NADP(+) = (6R)-5,10-methenyltetrahydrofolate + NADPH. The enzyme catalyses (6R)-5,10-methenyltetrahydrofolate + H2O = (6R)-10-formyltetrahydrofolate + H(+). Its pathway is one-carbon metabolism; tetrahydrofolate interconversion. In terms of biological role, catalyzes the oxidation of 5,10-methylenetetrahydrofolate to 5,10-methenyltetrahydrofolate and then the hydrolysis of 5,10-methenyltetrahydrofolate to 10-formyltetrahydrofolate. The chain is Bifunctional protein FolD from Verminephrobacter eiseniae (strain EF01-2).